A 155-amino-acid chain; its full sequence is 3-hydroxyacyl-[acyl-carrier-protein] dehydratase FabZ (155 aa).

His54 is an active-site residue.

It belongs to the thioester dehydratase family. FabZ subfamily.

It is found in the cytoplasm. It catalyses the reaction a (3R)-hydroxyacyl-[ACP] = a (2E)-enoyl-[ACP] + H2O. Involved in unsaturated fatty acids biosynthesis. Catalyzes the dehydration of short chain beta-hydroxyacyl-ACPs and long chain saturated and unsaturated beta-hydroxyacyl-ACPs. The polypeptide is 3-hydroxyacyl-[acyl-carrier-protein] dehydratase FabZ (Burkholderia lata (strain ATCC 17760 / DSM 23089 / LMG 22485 / NCIMB 9086 / R18194 / 383)).